The chain runs to 198 residues: ATP synthase protein MI25 (198 aa).

The chain crosses the membrane as a helical span at residues 29–49; it reads ISIYNEEMIVALCFIGFIIFS.

Belongs to the ATPase protein MI25 family. As to quaternary structure, F-type ATPases have 2 components, CF(1) - the catalytic core - and CF(0) - the membrane proton channel. CF(1) has five subunits: alpha(3), beta(3), gamma(1), delta(1), epsilon(1). CF(0) has three main subunits: a, b and c.

The protein localises to the mitochondrion membrane. This is one of the chains of the nonenzymatic component (CF(0) subunit) of the mitochondrial ATPase complex. The chain is ATP synthase protein MI25 from Nicotiana tabacum (Common tobacco).